The sequence spans 226 residues: 2-C-methyl-D-erythritol 4-phosphate cytidylyltransferase (226 aa).

The protein belongs to the IspD/TarI cytidylyltransferase family. IspD subfamily.

The enzyme catalyses 2-C-methyl-D-erythritol 4-phosphate + CTP + H(+) = 4-CDP-2-C-methyl-D-erythritol + diphosphate. It participates in isoprenoid biosynthesis; isopentenyl diphosphate biosynthesis via DXP pathway; isopentenyl diphosphate from 1-deoxy-D-xylulose 5-phosphate: step 2/6. Functionally, catalyzes the formation of 4-diphosphocytidyl-2-C-methyl-D-erythritol from CTP and 2-C-methyl-D-erythritol 4-phosphate (MEP). This is 2-C-methyl-D-erythritol 4-phosphate cytidylyltransferase from Trichodesmium erythraeum (strain IMS101).